Consider the following 554-residue polypeptide: uncharacterized protein (554 aa).

The interval 1–25 (MSSSIPPRLYDMSPTESKKQEDVSE) is disordered. Ser-13 is subject to Phosphoserine. 6 helical membrane passes run 82–102 (FFVA…TSLI), 120–140 (APYL…VWSL), 149–169 (WAFN…GASP), 171–191 (FASI…NLPV), 210–230 (VMSF…WGLI), and 253–273 (FLFT…LVSV). Ser-334 carries the phosphoserine modification. The next 6 membrane-spanning stretches (helical) occupy residues 364–384 (LAIS…AFPL), 412–432 (SLIV…LVEF), 437–457 (KGTL…STTA), 462–482 (AYLG…GVLY), 497–517 (AVGL…VIAM), and 525–545 (APIF…VFFP).

The protein belongs to the major facilitator superfamily.

The protein resides in the endoplasmic reticulum. The protein localises to the membrane. This is an uncharacterized protein from Schizosaccharomyces pombe (strain 972 / ATCC 24843) (Fission yeast).